We begin with the raw amino-acid sequence, 120 residues long: Prefoldin subunit beta (120 aa).

Belongs to the prefoldin subunit beta family. In terms of assembly, heterohexamer of two alpha and four beta subunits.

Its subcellular location is the cytoplasm. In terms of biological role, molecular chaperone capable of stabilizing a range of proteins. Seems to fulfill an ATP-independent, HSP70-like function in archaeal de novo protein folding. In Methanopyrus kandleri (strain AV19 / DSM 6324 / JCM 9639 / NBRC 100938), this protein is Prefoldin subunit beta (pfdB).